A 353-amino-acid polypeptide reads, in one-letter code: Virulence plasmid protein pGP2-D (353 aa).

In Chlamydia muridarum (strain MoPn / Nigg), this protein is Virulence plasmid protein pGP2-D.